The chain runs to 260 residues: Circadian clock-controlled protein daywake (260 aa).

Residues M1 to A25 form the signal peptide.

Belongs to the TO family.

Component of the circadian clock or downstream effector of clock function. Required for suppressing daytime sleep (siesta) under ambient environmental temperatures. Part of a heat avoidance mechanism that modulates daytime sleep behavior under different environmental temperatures to minimize the risk of heat exposure. Under cooler ambient temperatures, suppresses daytime sleep (siesta) and thus allows for longer periods of daytime activity. This Drosophila yakuba (Fruit fly) protein is Circadian clock-controlled protein daywake.